We begin with the raw amino-acid sequence, 247 residues long: 1-(5-phosphoribosyl)-5-[(5-phosphoribosylamino)methylideneamino] imidazole-4-carboxamide isomerase (247 aa).

The Proton acceptor role is filled by aspartate 8. The active-site Proton donor is aspartate 131.

The protein belongs to the HisA/HisF family.

The protein resides in the cytoplasm. It carries out the reaction 1-(5-phospho-beta-D-ribosyl)-5-[(5-phospho-beta-D-ribosylamino)methylideneamino]imidazole-4-carboxamide = 5-[(5-phospho-1-deoxy-D-ribulos-1-ylimino)methylamino]-1-(5-phospho-beta-D-ribosyl)imidazole-4-carboxamide. It participates in amino-acid biosynthesis; L-histidine biosynthesis; L-histidine from 5-phospho-alpha-D-ribose 1-diphosphate: step 4/9. The polypeptide is 1-(5-phosphoribosyl)-5-[(5-phosphoribosylamino)methylideneamino] imidazole-4-carboxamide isomerase (Methylobacillus flagellatus (strain ATCC 51484 / DSM 6875 / VKM B-1610 / KT)).